Here is a 143-residue protein sequence, read N- to C-terminus: Large ribosomal subunit protein uL11 (143 aa).

The protein belongs to the universal ribosomal protein uL11 family. As to quaternary structure, part of the ribosomal stalk of the 50S ribosomal subunit. Interacts with L10 and the large rRNA to form the base of the stalk. L10 forms an elongated spine to which L12 dimers bind in a sequential fashion forming a multimeric L10(L12)X complex. In terms of processing, one or more lysine residues are methylated.

Forms part of the ribosomal stalk which helps the ribosome interact with GTP-bound translation factors. The protein is Large ribosomal subunit protein uL11 of Albidiferax ferrireducens (strain ATCC BAA-621 / DSM 15236 / T118) (Rhodoferax ferrireducens).